The following is a 131-amino-acid chain: UPF0342 protein DSY1594 (131 aa).

Belongs to the UPF0342 family.

This is UPF0342 protein DSY1594 from Desulfitobacterium hafniense (strain Y51).